The chain runs to 617 residues: uncharacterized protein (617 aa).

A helical membrane pass occupies residues 10-30 (AFFFFFVSLILLFLSPSYSDV). Residues 34 to 58 (ESDPIPYENSDASPGVVTSSESDRQ) are disordered. Residues 43–53 (SDASPGVVTSS) show a composition bias toward polar residues. Residues 60 to 86 (VSLHRLEELVRNLTELVARLDAKLSET) are a coiled coil. Residues 473–493 (MLWSSPVFFFILFLFGAWHFF) form a helical membrane-spanning segment. Residues 511-529 (STTMSSSSTTTAQNSSAFS) are compositionally biased toward low complexity. The tract at residues 511–617 (STTMSSSSTT…GNNKALDDES (107 aa)) is disordered. Basic and acidic residues predominate over residues 531 to 543 (STRRNDDHMDLRR). A compositionally biased stretch (polar residues) spans 563–584 (VGSNDPSSRAPVETTNYRTTAQ). Positions 590–599 (GGSGLDSGGF) are enriched in gly residues.

The protein resides in the membrane. This is an uncharacterized protein from Arabidopsis thaliana (Mouse-ear cress).